The sequence spans 351 residues: Prostaglandin reductase 2 (351 aa).

99-100 lines the substrate pocket; it reads FY. Residues 165–168, K192, Y208, N231, 253–259, 287–289, and N337 contribute to the NADP(+) site; these read GACG, CGQISQY, and FLV. 288-290 serves as a coordination point for substrate; it reads LVL.

Belongs to the NADP-dependent oxidoreductase L4BD family. As to quaternary structure, monomer. As to expression, widely expressed.

Its subcellular location is the cytoplasm. It catalyses the reaction 13,14-dihydro-15-oxo-prostaglandin E2 + NAD(+) = 15-oxoprostaglandin E2 + NADH + H(+). It carries out the reaction 13,14-dihydro-15-oxo-prostaglandin E2 + NADP(+) = 15-oxoprostaglandin E2 + NADPH + H(+). The catalysed reaction is 13,14-dihydro-15-oxo-PGF2alpha + NADP(+) = 15-oxoprostaglandin F2alpha + NADPH + H(+). The enzyme catalyses 13,14-dihydro-15-oxo-prostaglandin E1 + NADP(+) = 15-oxoprostaglandin E1 + NADPH + H(+). It catalyses the reaction 13,14-dihydro-15-oxo-prostaglandin F1alpha + NADP(+) = 15-oxoprostaglandin F1alpha + NADPH + H(+). Functionally, functions as 15-oxo-prostaglandin 13-reductase and acts on 15-keto-PGE1, 15-keto-PGE2, 15-keto-PGE1-alpha and 15-keto-PGE2-alpha with highest activity towards 15-keto-PGE2. Overexpression represses transcriptional activity of PPARG and inhibits adipocyte differentiation. The protein is Prostaglandin reductase 2 of Homo sapiens (Human).